A 480-amino-acid chain; its full sequence is Bifunctional protein HldE (480 aa).

A ribokinase region spans residues 1-316; sequence MNMHDFSKTK…EQLNASMRHQ (316 aa). 192-195 lines the ATP pocket; that stretch reads NQGE. The active site involves Asp261. Positions 342–480 are cytidylyltransferase; it reads FTNGCFDLLH…EAEIKEGAAQ (139 aa).

It in the N-terminal section; belongs to the carbohydrate kinase PfkB family. In the C-terminal section; belongs to the cytidylyltransferase family. Homodimer.

The enzyme catalyses D-glycero-beta-D-manno-heptose 7-phosphate + ATP = D-glycero-beta-D-manno-heptose 1,7-bisphosphate + ADP + H(+). It carries out the reaction D-glycero-beta-D-manno-heptose 1-phosphate + ATP + H(+) = ADP-D-glycero-beta-D-manno-heptose + diphosphate. The protein operates within nucleotide-sugar biosynthesis; ADP-L-glycero-beta-D-manno-heptose biosynthesis; ADP-L-glycero-beta-D-manno-heptose from D-glycero-beta-D-manno-heptose 7-phosphate: step 1/4. It participates in nucleotide-sugar biosynthesis; ADP-L-glycero-beta-D-manno-heptose biosynthesis; ADP-L-glycero-beta-D-manno-heptose from D-glycero-beta-D-manno-heptose 7-phosphate: step 3/4. Its function is as follows. Catalyzes the phosphorylation of D-glycero-D-manno-heptose 7-phosphate at the C-1 position to selectively form D-glycero-beta-D-manno-heptose-1,7-bisphosphate. Functionally, catalyzes the ADP transfer from ATP to D-glycero-beta-D-manno-heptose 1-phosphate, yielding ADP-D-glycero-beta-D-manno-heptose. In Hydrogenovibrio crunogenus (strain DSM 25203 / XCL-2) (Thiomicrospira crunogena), this protein is Bifunctional protein HldE.